We begin with the raw amino-acid sequence, 278 residues long: Large ribosomal subunit protein uL2 (278 aa).

The disordered stretch occupies residues 201 to 278 (HGNINDGKAG…IMRSRHQRKK (78 aa)). Basic residues predominate over residues 210-221 (GRSRWRGKKPHV).

The protein belongs to the universal ribosomal protein uL2 family. Part of the 50S ribosomal subunit. Forms a bridge to the 30S subunit in the 70S ribosome.

One of the primary rRNA binding proteins. Required for association of the 30S and 50S subunits to form the 70S ribosome, for tRNA binding and peptide bond formation. It has been suggested to have peptidyltransferase activity; this is somewhat controversial. Makes several contacts with the 16S rRNA in the 70S ribosome. This chain is Large ribosomal subunit protein uL2, found in Rhizobium rhizogenes (strain K84 / ATCC BAA-868) (Agrobacterium radiobacter).